Reading from the N-terminus, the 909-residue chain is DNA mismatch repair protein MutS (909 aa).

614 to 621 (GPNMAGKS) contributes to the ATP binding site. Residues 798–827 (LEENSPQNNDISKESSSSSNSHDKLESSVI) form a disordered region. The segment covering 818 to 827 (SHDKLESSVI) has biased composition (basic and acidic residues).

The protein belongs to the DNA mismatch repair MutS family.

In terms of biological role, this protein is involved in the repair of mismatches in DNA. It is possible that it carries out the mismatch recognition step. This protein has a weak ATPase activity. The protein is DNA mismatch repair protein MutS of Clostridium novyi (strain NT).